The primary structure comprises 83 residues: Cytochrome b559 subunit alpha (83 aa).

A helical transmembrane segment spans residues 21–35 (VIHSITIPSLFIAGW). Histidine 23 is a binding site for heme.

The protein belongs to the PsbE/PsbF family. Heterodimer of an alpha subunit and a beta subunit. PSII is composed of 1 copy each of membrane proteins PsbA, PsbB, PsbC, PsbD, PsbE, PsbF, PsbH, PsbI, PsbJ, PsbK, PsbL, PsbM, PsbT, PsbX, PsbY, PsbZ, Psb30/Ycf12, at least 3 peripheral proteins of the oxygen-evolving complex and a large number of cofactors. It forms dimeric complexes. Heme b serves as cofactor.

The protein resides in the plastid. The protein localises to the chloroplast thylakoid membrane. In terms of biological role, this b-type cytochrome is tightly associated with the reaction center of photosystem II (PSII). PSII is a light-driven water:plastoquinone oxidoreductase that uses light energy to abstract electrons from H(2)O, generating O(2) and a proton gradient subsequently used for ATP formation. It consists of a core antenna complex that captures photons, and an electron transfer chain that converts photonic excitation into a charge separation. This chain is Cytochrome b559 subunit alpha, found in Zygnema circumcarinatum (Green alga).